Reading from the N-terminus, the 233-residue chain is 7-cyano-7-deazaguanine synthase 2 (233 aa).

ATP is bound at residue 8-18 (LSGGLDSTTCM). Zn(2+)-binding residues include Cys-186, Cys-194, Cys-197, and Cys-200.

The protein belongs to the QueC family. Homodimer. Zn(2+) is required as a cofactor.

It carries out the reaction 7-carboxy-7-deazaguanine + NH4(+) + ATP = 7-cyano-7-deazaguanine + ADP + phosphate + H2O + H(+). It participates in purine metabolism; 7-cyano-7-deazaguanine biosynthesis. Its function is as follows. Catalyzes the ATP-dependent conversion of 7-carboxy-7-deazaguanine (CDG) to 7-cyano-7-deazaguanine (preQ(0)). In Desulfitobacterium hafniense (strain Y51), this protein is 7-cyano-7-deazaguanine synthase 2.